Consider the following 389-residue polypeptide: Succinate--CoA ligase [ADP-forming] subunit beta (389 aa).

The ATP-grasp domain maps to 9 to 236; the sequence is RDLFEAHGVP…ERTEDPLEAK (228 aa). ATP-binding positions include K45, 52-54, A94, and E99; that span reads GRG. Mg(2+)-binding residues include N191 and D205. Substrate-binding positions include N256 and 318–320; that span reads GIT.

This sequence belongs to the succinate/malate CoA ligase beta subunit family. Heterotetramer of two alpha and two beta subunits. The cofactor is Mg(2+).

The enzyme catalyses succinate + ATP + CoA = succinyl-CoA + ADP + phosphate. The catalysed reaction is GTP + succinate + CoA = succinyl-CoA + GDP + phosphate. It participates in carbohydrate metabolism; tricarboxylic acid cycle; succinate from succinyl-CoA (ligase route): step 1/1. In terms of biological role, succinyl-CoA synthetase functions in the citric acid cycle (TCA), coupling the hydrolysis of succinyl-CoA to the synthesis of either ATP or GTP and thus represents the only step of substrate-level phosphorylation in the TCA. The beta subunit provides nucleotide specificity of the enzyme and binds the substrate succinate, while the binding sites for coenzyme A and phosphate are found in the alpha subunit. The chain is Succinate--CoA ligase [ADP-forming] subunit beta from Micrococcus luteus (strain ATCC 4698 / DSM 20030 / JCM 1464 / CCM 169 / CCUG 5858 / IAM 1056 / NBRC 3333 / NCIMB 9278 / NCTC 2665 / VKM Ac-2230) (Micrococcus lysodeikticus).